The sequence spans 143 residues: Mannitol-specific phosphotransferase enzyme IIA component (143 aa).

The region spanning 1-142 (MKLLKNNIYI…DKVLEFLAKH (142 aa)) is the PTS EIIA type-2 domain. Residue His-61 is the Tele-phosphohistidine intermediate of the active site. His-61 bears the Phosphohistidine; by HPr mark.

Its subcellular location is the cytoplasm. The phosphoenolpyruvate-dependent sugar phosphotransferase system (sugar PTS), a major carbohydrate active transport system, catalyzes the phosphorylation of incoming sugar substrates concomitantly with their translocation across the cell membrane. The enzyme II CmtAB PTS system is involved in D-mannitol transport. This Mycoplasma pneumoniae (strain ATCC 29342 / M129 / Subtype 1) (Mycoplasmoides pneumoniae) protein is Mannitol-specific phosphotransferase enzyme IIA component (mtlF).